The following is a 394-amino-acid chain: Protein STRICTOSIDINE SYNTHASE-LIKE 1 (394 aa).

An N-terminal signal peptide occupies residues 1 to 21 (MESLLLIAYAFLYLFLLSHEA). Basic and acidic residues predominate over residues 61–73 (GLEKRPNHSEDNP). Residues 61–92 (GLEKRPNHSEDNPPSRGWTGEPGLDPRGEGPY) are disordered. Asparagine 67, asparagine 122, and asparagine 196 each carry an N-linked (GlcNAc...) asparagine glycan.

It belongs to the strictosidine synthase family.

Its subcellular location is the vacuole. This Arabidopsis thaliana (Mouse-ear cress) protein is Protein STRICTOSIDINE SYNTHASE-LIKE 1.